Reading from the N-terminus, the 216-residue chain is uncharacterized protein (216 aa).

The segment at 55–216 (NEDKAEAMSN…NEKEKDVNPK (162 aa)) is disordered. 3 stretches are compositionally biased toward basic and acidic residues: residues 134–152 (LTEKPLTDTEPELHPDNHV), 177–187 (KINDKSDDTLH), and 207–216 (NEKEKDVNPK).

This is an uncharacterized protein from Caenorhabditis elegans.